The following is a 534-amino-acid chain: Arginine--tRNA ligase (534 aa).

The 'HIGH' region signature appears at 120–130 (ANPTGFLHLGH).

It belongs to the class-I aminoacyl-tRNA synthetase family. As to quaternary structure, monomer.

The protein resides in the cytoplasm. It catalyses the reaction tRNA(Arg) + L-arginine + ATP = L-arginyl-tRNA(Arg) + AMP + diphosphate. The sequence is that of Arginine--tRNA ligase from Mesomycoplasma hyopneumoniae (strain J / ATCC 25934 / NCTC 10110) (Mycoplasma hyopneumoniae).